Reading from the N-terminus, the 143-residue chain is UPF0251 protein Rru_A1194 (143 aa).

The tract at residues 100–143 is disordered; it reads LDGSACPNRRQRRGPCARRGAAGALARQTGDEPPSSPTDNEKDD. The span at 116-126 shows a compositional bias: low complexity; sequence ARRGAAGALAR.

Belongs to the UPF0251 family.

In Rhodospirillum rubrum (strain ATCC 11170 / ATH 1.1.1 / DSM 467 / LMG 4362 / NCIMB 8255 / S1), this protein is UPF0251 protein Rru_A1194.